The sequence spans 124 residues: MKLLVVDDSSTMRRIIKNTLSRLGYEDVLEAEHGVEAWEKLDANADTKVLITDWNMPEMNGLDLVKKVRADNRFKEIPIIMITTEGGKAEVITALKAGVNNYIVKPFTPQVLKEKLEVVLGTND.

The Response regulatory domain maps to 2–120; that stretch reads KLLVVDDSST…VLKEKLEVVL (119 aa). Mg(2+)-binding residues include aspartate 7, aspartate 8, aspartate 53, and asparagine 55. Aspartate 53 carries the post-translational modification 4-aspartylphosphate.

Interacts (when phosphorylated) with FliM. The cofactor is Mg(2+). In terms of processing, phosphorylated by CheAY. Dephosphorylated (inactivated) by CheZ.

It is found in the cytoplasm. In terms of biological role, chemotactic response regulator protein that modulates the rotation direction of bacterial flagellar motors. Plays an important role in the colonization and infection of Helicobacter pylori. Upon phosphorylation by CheA, interacts with the flagellar motor protein FliM to cause clockwise flagellar rotation and bacterial reversals, as opposed to straight swimming when CheY1 is not phosphorylated. This chain is Chemotaxis protein CheY1 (cheY1), found in Helicobacter pylori (strain J99 / ATCC 700824) (Campylobacter pylori J99).